Reading from the N-terminus, the 596-residue chain is Nuclear receptor subfamily 2 group C member 2 (596 aa).

Phosphoserine; by MAPK is present on serine 19. Serine 46 is subject to Phosphoserine. Phosphoserine; by MAPK occurs at positions 55 and 68. A Phosphoserine modification is found at serine 98. The segment at residues 114-189 is a DNA-binding region (nuclear receptor); it reads VEYCVVCGDK…MGMKMESVQS (76 aa). NR C4-type zinc fingers lie at residues 117-137 and 153-177; these read CVVC…CEGC and CRSS…LKKC. Lysine 192 is covalently cross-linked (Glycyl lysine isopeptide (Lys-Gly) (interchain with G-Cter in SUMO2)). Serine 219 is modified (phosphoserine). At lysine 231 the chain carries N6-acetyllysine. Residues 341–583 enclose the NR LBD domain; sequence GSIHVISRDQ…SIIPYILKME (243 aa).

Belongs to the nuclear hormone receptor family. NR2 subfamily. Homodimer; can bind DNA as homodimer. Heterodimer; binds DNA as a heterodimer with NR2C1 required for chromatin remodeling and for binding to promoter regions such as globin DR1 repeats. Interacts with NR2C2AP; the interaction represses selective NR2C2-mediated transcriptional activity. Interacts with PCAF; the interaction preferentially occurs on the non-phosphorylated form and induces NR2C2-mediated transactivation activity and does not require the ligand-binding domain. Interacts (MAPK-mediated phosphorylated form) with NRIP1; the interaction promotes repression of NR2C2-mediated activity. Interacts with NLRP10. Interacts (via ligand-binding region) with transcriptional corepressor JAZF1; the interaction promotes NR2C2-mediated transcriptional repression. Phosphorylation on Ser-19 and Ser-68 is an important regulator of NR2C2-mediated transcriptional activity. Phosphorylation on these residues recruits the corepressor, NRIP1, leading to transcripional repression, whereas the non-phosphorylated form preferentially recruits the coactivator, PCAF. Expressed in hepatocytes. Also expressed in granule cells of the hippocampus and the cerebellum.

Its subcellular location is the nucleus. Functionally, orphan nuclear receptor that can act as a repressor or activator of transcription. An important repressor of nuclear receptor signaling pathways such as retinoic acid receptor, retinoid X, vitamin D3 receptor, thyroid hormone receptor and estrogen receptor pathways. May regulate gene expression during the late phase of spermatogenesis. Activates transcriptional activity of LHCG and is antagonist of PPARA-mediated transactivation. Together with NR2C1, forms the core of the DRED (direct repeat erythroid-definitive) complex that represses embryonic and fetal globin transcription including that of GATA1. Binds to hormone response elements (HREs) consisting of two 5'-AGGTCA-3' half site direct repeat consensus sequences. Plays a fundamental role in early embryonic development and embryonic stem cells. Required for normal spermatogenesis and cerebellum development. Appears to be important for neurodevelopmentally regulated behavior. This Rattus norvegicus (Rat) protein is Nuclear receptor subfamily 2 group C member 2 (Nr2c2).